A 200-amino-acid chain; its full sequence is ATP synthase subunit b (200 aa).

The helical transmembrane segment at 12–32 (ILSGLAVAVAILVPVLALASG) threads the bilayer.

The protein belongs to the ATPase B chain family. F-type ATPases have 2 components, F(1) - the catalytic core - and F(0) - the membrane proton channel. F(1) has five subunits: alpha(3), beta(3), gamma(1), delta(1), epsilon(1). F(0) has three main subunits: a(1), b(2) and c(10-14). The alpha and beta chains form an alternating ring which encloses part of the gamma chain. F(1) is attached to F(0) by a central stalk formed by the gamma and epsilon chains, while a peripheral stalk is formed by the delta and b chains.

The protein resides in the cell inner membrane. Its function is as follows. F(1)F(0) ATP synthase produces ATP from ADP in the presence of a proton or sodium gradient. F-type ATPases consist of two structural domains, F(1) containing the extramembraneous catalytic core and F(0) containing the membrane proton channel, linked together by a central stalk and a peripheral stalk. During catalysis, ATP synthesis in the catalytic domain of F(1) is coupled via a rotary mechanism of the central stalk subunits to proton translocation. Functionally, component of the F(0) channel, it forms part of the peripheral stalk, linking F(1) to F(0). This chain is ATP synthase subunit b, found in Trichlorobacter lovleyi (strain ATCC BAA-1151 / DSM 17278 / SZ) (Geobacter lovleyi).